The sequence spans 158 residues: UPF0758 protein YkfG (158 aa).

The MPN domain occupies 36–158 (AFTSTHAVRE…IYSFAEHGLL (123 aa)). Zn(2+) is bound by residues His-107, His-109, and Asp-120. A JAMM motif motif is present at residues 107–120 (HNHPSGETTPSQAD).

It belongs to the UPF0758 family.

The sequence is that of UPF0758 protein YkfG (ykfG) from Escherichia coli (strain K12).